A 222-amino-acid polypeptide reads, in one-letter code: 26S proteasome non-ATPase regulatory subunit 9 (222 aa).

In terms of domain architecture, PDZ spans 108–194; it reads QARDMAEARE…KPLNVTVIRR (87 aa). Ser128 carries the post-translational modification Phosphoserine.

The protein belongs to the proteasome subunit p27 family. As to quaternary structure, interacts with PSMC3. Part of a transient complex (modulator) containing PSMD9, PSMC6 and PSMC3 formed during the assembly of the 26S proteasome.

Its function is as follows. Acts as a chaperone during the assembly of the 26S proteasome, specifically of the base subcomplex of the PA700/19S regulatory complex (RC). During the base subcomplex assembly is part of an intermediate PSMD9:PSMC6:PSMC3 module, also known as modulator trimer complex; PSMD9 is released during the further base assembly process. The protein is 26S proteasome non-ATPase regulatory subunit 9 (Psmd9) of Mus musculus (Mouse).